We begin with the raw amino-acid sequence, 614 residues long: Type VII secretion system protein EssD (614 aa).

Residues 417–445 form a disordered region; it reads QNHVTHGPKDSMVRSEGKHSISSHEMNSS. Over residues 423–435 the composition is skewed to basic and acidic residues; it reads GPKDSMVRSEGKH.

It belongs to the EssD family. As to quaternary structure, interacts (via C-terminal) with EssG; this interaction blocks EssD activity. Interacts with EssE.

It localises to the secreted. It is found in the cell membrane. Its function is as follows. Component of the type VII secretion system (Ess). Plays a role in Ess secretion during infection. Required for the efficient secretion of EsxA. Required for abscess formation and staphylococcal persistence in host tissues. Possesses a toxic DNase activity that is modulated by EsaG by forming a nuclease toxin-antitoxin pair. This nuclease toxin targets competitor bacteria. The sequence is that of Type VII secretion system protein EssD from Staphylococcus aureus (strain USA300).